Consider the following 85-residue polypeptide: UPF0297 protein LGAS_0422 (85 aa).

The protein belongs to the UPF0297 family.

The chain is UPF0297 protein LGAS_0422 from Lactobacillus gasseri (strain ATCC 33323 / DSM 20243 / BCRC 14619 / CIP 102991 / JCM 1131 / KCTC 3163 / NCIMB 11718 / NCTC 13722 / AM63).